A 131-amino-acid chain; its full sequence is UPF0102 protein YraN (131 aa).

A compositionally biased stretch (polar residues) spans 1 to 19 (MATVPTRSGSPRQLTTKQT). Positions 1–20 (MATVPTRSGSPRQLTTKQTG) are disordered.

This sequence belongs to the UPF0102 family.

The polypeptide is UPF0102 protein YraN (Shigella boydii serotype 18 (strain CDC 3083-94 / BS512)).